Here is an 80-residue protein sequence, read N- to C-terminus: UPF0125 protein PD_1376 (80 aa).

This sequence belongs to the UPF0125 (RnfH) family.

In Xylella fastidiosa (strain Temecula1 / ATCC 700964), this protein is UPF0125 protein PD_1376.